We begin with the raw amino-acid sequence, 167 residues long: Leptin (167 aa).

The N-terminal stretch at 1 to 21 is a signal peptide; that stretch reads MRCGPLCRFLWLWPYLSCVEA. A disulfide bond links Cys-117 and Cys-167.

This sequence belongs to the leptin family.

Its subcellular location is the secreted. Key player in the regulation of energy balance and body weight control. Once released into the circulation, has central and peripheral effects by binding LEPR, found in many tissues, which results in the activation of several major signaling pathways. In the hypothalamus, acts as an appetite-regulating factor that induces a decrease in food intake and an increase in energy consumption by inducing anorexinogenic factors and suppressing orexigenic neuropeptides, also regulates bone mass and secretion of hypothalamo-pituitary-adrenal hormones. In the periphery, increases basal metabolism, influences reproductive function, regulates pancreatic beta-cell function and insulin secretion, is pro-angiogenic for endothelial cell and affects innate and adaptive immunity. In the arcuate nucleus of the hypothalamus, activates by depolarization POMC neurons inducing FOS and SOCS3 expression to release anorexigenic peptides and inhibits by hyperpolarization NPY neurons inducing SOCS3 with a consequent reduction on release of orexigenic peptides. In addition to its known satiety inducing effect, has a modulatory role in nutrient absorption. In the intestine, reduces glucose absorption by enterocytes by activating PKC and leading to a sequential activation of p38, PI3K and ERK signaling pathways which exerts an inhibitory effect on glucose absorption. Acts as a growth factor on certain tissues, through the activation of different signaling pathways increases expression of genes involved in cell cycle regulation such as CCND1, via JAK2-STAT3 pathway, or VEGFA, via MAPK1/3 and PI3K-AKT1 pathways. May also play an apoptotic role via JAK2-STAT3 pathway and up-regulation of BIRC5 expression. Pro-angiogenic, has mitogenic activity on vascular endothelial cells and plays a role in matrix remodeling by regulating the expression of matrix metalloproteinases (MMPs) and tissue inhibitors of metalloproteinases (TIMPs). In innate immunity, modulates the activity and function of neutrophils by increasing chemotaxis and the secretion of oxygen radicals. Increases phagocytosis by macrophages and enhances secretion of pro-inflammatory mediators. Increases cytotoxic ability of NK cells. Plays a pro-inflammatory role, in synergy with IL1B, by inducing NOS2 which promotes the production of IL6, IL8 and Prostaglandin E2, through a signaling pathway that involves JAK2, PI3K, MAP2K1/MEK1 and MAPK14/p38. In adaptive immunity, promotes the switch of memory T-cells towards T helper-1 cell immune responses. Increases CD4(+)CD25(-) T-cell proliferation and reduces autophagy during TCR (T-cell receptor) stimulation, through MTOR signaling pathway activation and BCL2 up-regulation. The polypeptide is Leptin (LEP) (Canis lupus familiaris (Dog)).